The following is a 34-amino-acid chain: Photosystem II reaction center protein Psb30 (34 aa).

A helical membrane pass occupies residues 7-27 (VAQLLALFVIITSGPAIIILI).

This sequence belongs to the Psb30/Ycf12 family. PSII is composed of 1 copy each of membrane proteins PsbA, PsbB, PsbC, PsbD, PsbE, PsbF, PsbH, PsbI, PsbJ, PsbK, PsbL, PsbM, PsbT, PsbX, PsbY, PsbZ, Psb30/Ycf12, peripheral proteins of the oxygen-evolving complex and a large number of cofactors. It forms dimeric complexes.

Its subcellular location is the plastid. It localises to the chloroplast thylakoid membrane. A core subunit of photosystem II (PSII), probably helps stabilize the reaction center. The chain is Photosystem II reaction center protein Psb30 from Guillardia theta (Cryptophyte).